The following is a 202-amino-acid chain: Transmembrane protein 223 (202 aa).

The Mitochondrial matrix segment spans residues 1-43 (MAAPWRRWPTGLLAVLRPLLTCRPLQGTTLQRDVLLFEHDRGR). A helical membrane pass occupies residues 44 to 64 (FFTILGLFCAGQGVFWASMAV). Over 65–97 (AAVSRPPVPVQPLDAEVPNRGPFDLRSALWRYG) the chain is Mitochondrial intermembrane. The chain crosses the membrane as a helical span at residues 98 to 118 (LAVGCGAIGALVLGAGLLFSL). Over 119-202 (RSVRSVVLRA…DNTVGAYRSL (84 aa)) the chain is Mitochondrial matrix.

Belongs to the TMEM223 family. Associates with the mitochondrial ribosome.

It is found in the mitochondrion inner membrane. Its function is as follows. Mitochondrial ribosome-associated protein involved in the first steps of cytochrome c oxidase complex (complex IV) biogenesis. Stimulates the translation of MT-CO1 mRNA and is a constituent of early MT-CO1 assembly intermediates. The polypeptide is Transmembrane protein 223 (Homo sapiens (Human)).